A 272-amino-acid polypeptide reads, in one-letter code: U11/U12 small nuclear ribonucleoprotein 35 kDa protein (272 aa).

The RRM domain maps to 51-129 (LTLFVSRLSP…REVFVDFELE (79 aa)). Composition is skewed to basic and acidic residues over residues 146 to 162 (GKKESGQLRFGGRDRPF) and 190 to 272 (RDRS…EHNR). The disordered stretch occupies residues 146–272 (GKKESGQLRF…RKHRSDEHNR (127 aa)). A coiled-coil region spans residues 221–258 (TKDDKEQNAEHTKRERSREQAKNDKDKEKKDSKRERSR).

It localises to the nucleus. This chain is U11/U12 small nuclear ribonucleoprotein 35 kDa protein (snrnp35), found in Xenopus laevis (African clawed frog).